The sequence spans 322 residues: tRNA-specific adenosine deaminase subunit TAD3 (322 aa).

Residues 162–283 (EVRNELSRAS…EMQRTGSLKL (122 aa)) enclose the CMP/dCMP-type deaminase domain. Residues H216, C254, C257, and C322 each contribute to the Zn(2+) site.

This sequence belongs to the cytidine and deoxycytidylate deaminase family. ADAT3 subfamily. In terms of assembly, heterodimer with TAD2.

It is found in the cytoplasm. The protein resides in the nucleus. The protein localises to the peroxisome. Structural subunit of tRNA-specific adenosine deaminase, which deaminates adenosine-34 (the first, also called wobble position of the anticodon) to inosine in many tRNAs. Inosine-34 allows the decoding of 3 different nucleotides at the third position of mRNA codons, as inosine is able to pair with U, C, and A. This is tRNA-specific adenosine deaminase subunit TAD3 (TAD3) from Saccharomyces cerevisiae (strain ATCC 204508 / S288c) (Baker's yeast).